The primary structure comprises 232 residues: Large ribosomal subunit protein uL1 (232 aa).

It belongs to the universal ribosomal protein uL1 family. Part of the 50S ribosomal subunit.

Its function is as follows. Binds directly to 23S rRNA. The L1 stalk is quite mobile in the ribosome, and is involved in E site tRNA release. In terms of biological role, protein L1 is also a translational repressor protein, it controls the translation of the L11 operon by binding to its mRNA. The chain is Large ribosomal subunit protein uL1 from Chlamydia trachomatis serovar D (strain ATCC VR-885 / DSM 19411 / UW-3/Cx).